The following is a 214-amino-acid chain: Riboflavin kinase (214 aa).

Residues 1–26 (MRPDGPRDPVAGPDSGPEPPYPVRLS) form a disordered region. Mg(2+) contacts are provided by T44 and N46. E116 functions as the Nucleophile in the catalytic mechanism.

This sequence belongs to the flavokinase family. Requires Zn(2+) as cofactor. Mg(2+) is required as a cofactor.

It catalyses the reaction riboflavin + ATP = FMN + ADP + H(+). Its pathway is cofactor biosynthesis; FMN biosynthesis; FMN from riboflavin (ATP route): step 1/1. In terms of biological role, catalyzes the phosphorylation of riboflavin (vitamin B2) to form flavin mononucleotide (FMN) coenzyme. The polypeptide is Riboflavin kinase (fmn1) (Aspergillus fumigatus (strain ATCC MYA-4609 / CBS 101355 / FGSC A1100 / Af293) (Neosartorya fumigata)).